Here is a 317-residue protein sequence, read N- to C-terminus: MTKVYIAGAIPEVGLNLLKEHFEVDMYDGEGLIDKETLKKGVEHADALISLLSTSVDKDIIDSANNLKIIANYGAGFNNIDVEYARQQNIDVTNTPHASTNATADLTIGLILSVARRIVEGDHLSRTTGFDGWAPLFFRGREVSGKTIGIIGLGEIGGAVAKRARAFDMDVLYTGPHRKEEKERDIGAKYVDLDTLLKNADFITINAAYNPSLHHMIDTEQFNKMKSTAYLINAGRGPIVNEQSLVEALDNKAIEGAALDVYEFEPEITDALKSFKNVVLTPHIGNATFEARDMMAKIVANDTIKKLNGDEPQFIVN.

NAD(+) contacts are provided by residues glutamate 155 to isoleucine 156, alanine 234 to arginine 236, and aspartate 260. The active site involves arginine 236. Residue glutamate 265 is part of the active site. Histidine 283 serves as the catalytic Proton donor. Histidine 283 to asparagine 286 contributes to the NAD(+) binding site.

The protein belongs to the D-isomer specific 2-hydroxyacid dehydrogenase family.

The sequence is that of Putative 2-hydroxyacid dehydrogenase SERP1888 from Staphylococcus epidermidis (strain ATCC 35984 / DSM 28319 / BCRC 17069 / CCUG 31568 / BM 3577 / RP62A).